A 517-amino-acid polypeptide reads, in one-letter code: Glutamate--tRNA ligase (517 aa).

A 'HIGH' region motif is present at residues Pro14–Gly24. A 'KMSKS' region motif is present at residues Lys266–Arg270. Lys269 contributes to the ATP binding site.

Belongs to the class-I aminoacyl-tRNA synthetase family. Glutamate--tRNA ligase type 1 subfamily. In terms of assembly, monomer.

It localises to the cytoplasm. It catalyses the reaction tRNA(Glu) + L-glutamate + ATP = L-glutamyl-tRNA(Glu) + AMP + diphosphate. Catalyzes the attachment of glutamate to tRNA(Glu) in a two-step reaction: glutamate is first activated by ATP to form Glu-AMP and then transferred to the acceptor end of tRNA(Glu). The polypeptide is Glutamate--tRNA ligase (Cytophaga hutchinsonii (strain ATCC 33406 / DSM 1761 / CIP 103989 / NBRC 15051 / NCIMB 9469 / D465)).